The following is a 91-amino-acid chain: Non-specific lipid-transfer protein P3 (91 aa).

Cystine bridges form between C3/C50, C13/C27, C28/C73, and C48/C87.

The protein localises to the secreted. In terms of biological role, plant non-specific lipid-transfer proteins transfer phospholipids as well as galactolipids across membranes. May play a role in wax or cutin deposition in the cell walls of expanding epidermal cells and certain secretory tissues. The protein is Non-specific lipid-transfer protein P3 of Vitis sp. (Grape).